The sequence spans 311 residues: tRNA-cytidine(32) 2-sulfurtransferase (311 aa).

A PP-loop motif motif is present at residues 47 to 52 (SGGKDS). [4Fe-4S] cluster is bound by residues Cys-122, Cys-125, and Cys-213.

The protein belongs to the TtcA family. In terms of assembly, homodimer. The cofactor is Mg(2+). [4Fe-4S] cluster serves as cofactor.

It localises to the cytoplasm. It carries out the reaction cytidine(32) in tRNA + S-sulfanyl-L-cysteinyl-[cysteine desulfurase] + AH2 + ATP = 2-thiocytidine(32) in tRNA + L-cysteinyl-[cysteine desulfurase] + A + AMP + diphosphate + H(+). The protein operates within tRNA modification. Functionally, catalyzes the ATP-dependent 2-thiolation of cytidine in position 32 of tRNA, to form 2-thiocytidine (s(2)C32). The sulfur atoms are provided by the cysteine/cysteine desulfurase (IscS) system. The chain is tRNA-cytidine(32) 2-sulfurtransferase from Escherichia coli O81 (strain ED1a).